A 155-amino-acid chain; its full sequence is Transcriptional regulator MraZ (155 aa).

SpoVT-AbrB domains are found at residues 5–52 (TYEN…SQDR) and 81–124 (SMNL…EPAA).

Belongs to the MraZ family. In terms of assembly, forms oligomers.

The protein localises to the cytoplasm. The protein resides in the nucleoid. This is Transcriptional regulator MraZ from Pelagibacter ubique (strain HTCC1062).